The chain runs to 301 residues: tRNA (guanine-N(7)-)-methyltransferase (301 aa).

Residues 1-26 (MSETPDSPRPVTPGSQASFGTYGGRP) are disordered. Residues E85, E110, N137, and D160 each coordinate S-adenosyl-L-methionine. D160 is an active-site residue. 2 residues coordinate substrate: K164 and D196. The segment at 244–270 (APVREGRAPVSTEHTGPNEGVDEEGGW) is disordered. 280–283 (TSFE) provides a ligand contact to substrate.

It belongs to the class I-like SAM-binding methyltransferase superfamily. TrmB family.

It carries out the reaction guanosine(46) in tRNA + S-adenosyl-L-methionine = N(7)-methylguanosine(46) in tRNA + S-adenosyl-L-homocysteine. The protein operates within tRNA modification; N(7)-methylguanine-tRNA biosynthesis. Catalyzes the formation of N(7)-methylguanine at position 46 (m7G46) in tRNA. This chain is tRNA (guanine-N(7)-)-methyltransferase, found in Paenarthrobacter aurescens (strain TC1).